Consider the following 88-residue polypeptide: MAASPVLAVDNSSVAADQLKSIIERIERLEEEKAGLAGDIKDVYAEAKANGFDTKVLRKIISIRKRDHEERQEEEAILELYMQALGMA.

The protein belongs to the UPF0335 family.

This chain is UPF0335 protein Mnod_5968, found in Methylobacterium nodulans (strain LMG 21967 / CNCM I-2342 / ORS 2060).